Consider the following 185-residue polypeptide: Elongation factor P (185 aa).

This sequence belongs to the elongation factor P family.

Its subcellular location is the cytoplasm. It functions in the pathway protein biosynthesis; polypeptide chain elongation. Its function is as follows. Involved in peptide bond synthesis. Stimulates efficient translation and peptide-bond synthesis on native or reconstituted 70S ribosomes in vitro. Probably functions indirectly by altering the affinity of the ribosome for aminoacyl-tRNA, thus increasing their reactivity as acceptors for peptidyl transferase. The chain is Elongation factor P from Nostoc punctiforme (strain ATCC 29133 / PCC 73102).